A 205-amino-acid chain; its full sequence is Small ribosomal subunit protein uS4 (205 aa).

The segment at 1–44 is disordered; it reads MSKRHSQKYKIDRRMGENLWGRPKSPVNSRSYGPGQHGQRRKTK. Residues 94–173 form the S4 RNA-binding domain; sequence SRLDAIVYRC…LPEYIDLDAK (80 aa).

The protein belongs to the universal ribosomal protein uS4 family. Part of the 30S ribosomal subunit. Contacts protein S5. The interaction surface between S4 and S5 is involved in control of translational fidelity.

In terms of biological role, one of the primary rRNA binding proteins, it binds directly to 16S rRNA where it nucleates assembly of the body of the 30S subunit. Functionally, with S5 and S12 plays an important role in translational accuracy. The protein is Small ribosomal subunit protein uS4 of Maricaulis maris (strain MCS10) (Caulobacter maris).